Consider the following 209-residue polypeptide: Methylated-DNA--protein-cysteine methyltransferase (209 aa).

C5 contacts Zn(2+). Residue S14 is modified to Phosphoserine. 2 residues coordinate Zn(2+): C24 and H29. Positions 35–57 (SGKTPSSDPKEAPASPELLGGPE) are disordered. H89 provides a ligand contact to Zn(2+). Residues T99, Y118, Q119, N127, and R132 each coordinate DNA. Catalysis depends on C149, which acts as the Nucleophile; methyl group acceptor. S155 is a DNA binding site. S205 carries the post-translational modification Phosphoserine.

Belongs to the MGMT family. Requires Zn(2+) as cofactor.

The protein localises to the nucleus. The catalysed reaction is a 6-O-methyl-2'-deoxyguanosine in DNA + L-cysteinyl-[protein] = S-methyl-L-cysteinyl-[protein] + a 2'-deoxyguanosine in DNA. It catalyses the reaction a 4-O-methyl-thymidine in DNA + L-cysteinyl-[protein] = a thymidine in DNA + S-methyl-L-cysteinyl-[protein]. Its function is as follows. Involved in the cellular defense against the biological effects of O6-methylguanine (O6-MeG) and O4-methylthymine (O4-MeT) in DNA. Repairs the methylated nucleobase in DNA by stoichiometrically transferring the methyl group to a cysteine residue in the enzyme. This is a suicide reaction: the enzyme is irreversibly inactivated. The sequence is that of Methylated-DNA--protein-cysteine methyltransferase (MGMT) from Cricetulus griseus (Chinese hamster).